The primary structure comprises 194 residues: CASP-like protein 2D1 (194 aa).

Basic and acidic residues predominate over residues 1–16 (MRDNNNNNTREEERSS). Residues 1–26 (MRDNNNNNTREEERSSSSKQQQPQAP) form a disordered region. Over 1 to 30 (MRDNNNNNTREEERSSSSKQQQPQAPMSLK) the chain is Cytoplasmic. The chain crosses the membrane as a helical span at residues 31-51 (IIDSCLRLSVVPLSVATIWLT). At 52-74 (VTNHESNPDYGNLEYNSIMGLKY) the chain is on the extracellular side. A helical membrane pass occupies residues 75-95 (MVGVSAISAIYALLSTVSSWV). Residues 96 to 110 (TCLVSKAWLFFIPDQ) lie on the Cytoplasmic side of the membrane. The chain crosses the membrane as a helical span at residues 111-133 (VLAYVMTTSVAGATEIVYLLNKG). Residues 134–152 (DKIVTWSEMCSSYPHYCSK) are Extracellular-facing. Residues 153–173 (LTIALGLHVFVLFFFLFLSVI) traverse the membrane as a helical segment. Residues 174-194 (SAYRAFSPFDPPCDSQTNNDA) are Cytoplasmic-facing.

Belongs to the Casparian strip membrane proteins (CASP) family. In terms of assembly, homodimer and heterodimers.

Its subcellular location is the cell membrane. In Arabidopsis thaliana (Mouse-ear cress), this protein is CASP-like protein 2D1.